We begin with the raw amino-acid sequence, 394 residues long: UPF0284 protein SYNW1869 (394 aa).

It belongs to the UPF0284 family.

This is UPF0284 protein SYNW1869 from Parasynechococcus marenigrum (strain WH8102).